The following is a 452-amino-acid chain: Trigger factor (452 aa).

The 86-residue stretch at 171 to 256 folds into the PPIase FKBP-type domain; that stretch reads GDRVKVNFKG…ATAIETPEEK (86 aa).

Belongs to the FKBP-type PPIase family. Tig subfamily.

The protein resides in the cytoplasm. The catalysed reaction is [protein]-peptidylproline (omega=180) = [protein]-peptidylproline (omega=0). Its function is as follows. Involved in protein export. Acts as a chaperone by maintaining the newly synthesized protein in an open conformation. Functions as a peptidyl-prolyl cis-trans isomerase. The chain is Trigger factor from Bradyrhizobium sp. (strain BTAi1 / ATCC BAA-1182).